We begin with the raw amino-acid sequence, 140 residues long: Low calcium response locus protein T (140 aa).

In Yersinia pestis, this protein is Low calcium response locus protein T (lcrT).